The primary structure comprises 149 residues: Calmodulin (149 aa).

A2 carries the post-translational modification N-acetylalanine. EF-hand domains are found at residues 8 to 43 (EQIS…LGQN), 44 to 79 (PTEA…KMRD), 81 to 116 (DSEE…LGEK), and 117 to 149 (LTDN…MLSK). D21, D23, D25, T27, E32, D57, D59, N61, T63, E68, D94, D96, N98, Y100, E105, D130, D132, D134, Q136, and E141 together coordinate Ca(2+).

Belongs to the calmodulin family.

In terms of biological role, calmodulin mediates the control of a large number of enzymes, ion channels and other proteins by Ca(2+). Among the enzymes to be stimulated by the calmodulin-Ca(2+) complex are a number of protein kinases and phosphatases. The polypeptide is Calmodulin (CMD1) (Pleurotus ostreatus (Oyster mushroom)).